The sequence spans 364 residues: Protein RecA (364 aa).

77–84 serves as a coordination point for ATP; it reads GPESSGKT. Residues 343–364 form a disordered region; it reads DRFLQNGGPDPDDGDGDATAEM. The span at 352–364 shows a compositional bias: acidic residues; sequence DPDDGDGDATAEM.

The protein belongs to the RecA family.

The protein resides in the cytoplasm. Its function is as follows. Can catalyze the hydrolysis of ATP in the presence of single-stranded DNA, the ATP-dependent uptake of single-stranded DNA by duplex DNA, and the ATP-dependent hybridization of homologous single-stranded DNAs. It interacts with LexA causing its activation and leading to its autocatalytic cleavage. The polypeptide is Protein RecA (Rhizobium johnstonii (strain DSM 114642 / LMG 32736 / 3841) (Rhizobium leguminosarum bv. viciae)).